Here is an 89-residue protein sequence, read N- to C-terminus: Small ribosomal subunit protein uS15 (89 aa).

Belongs to the universal ribosomal protein uS15 family. In terms of assembly, part of the 30S ribosomal subunit. Forms a bridge to the 50S subunit in the 70S ribosome, contacting the 23S rRNA.

In terms of biological role, one of the primary rRNA binding proteins, it binds directly to 16S rRNA where it helps nucleate assembly of the platform of the 30S subunit by binding and bridging several RNA helices of the 16S rRNA. Its function is as follows. Forms an intersubunit bridge (bridge B4) with the 23S rRNA of the 50S subunit in the ribosome. The sequence is that of Small ribosomal subunit protein uS15 from Chlorobium luteolum (strain DSM 273 / BCRC 81028 / 2530) (Pelodictyon luteolum).